The primary structure comprises 510 residues: Probable cytosol aminopeptidase (510 aa).

Residues Lys-272 and Asp-277 each contribute to the Mn(2+) site. Lys-284 is an active-site residue. Residues Asp-296, Asp-355, and Glu-357 each contribute to the Mn(2+) site. Arg-359 is an active-site residue.

The protein belongs to the peptidase M17 family. Requires Mn(2+) as cofactor.

The protein localises to the cytoplasm. The enzyme catalyses Release of an N-terminal amino acid, Xaa-|-Yaa-, in which Xaa is preferably Leu, but may be other amino acids including Pro although not Arg or Lys, and Yaa may be Pro. Amino acid amides and methyl esters are also readily hydrolyzed, but rates on arylamides are exceedingly low.. It catalyses the reaction Release of an N-terminal amino acid, preferentially leucine, but not glutamic or aspartic acids.. Presumably involved in the processing and regular turnover of intracellular proteins. Catalyzes the removal of unsubstituted N-terminal amino acids from various peptides. This chain is Probable cytosol aminopeptidase, found in Synechococcus sp. (strain JA-3-3Ab) (Cyanobacteria bacterium Yellowstone A-Prime).